A 686-amino-acid polypeptide reads, in one-letter code: DNA ligase (686 aa).

NAD(+) is bound by residues 45 to 49, 94 to 95, and Glu-127; these read DNEYD and SL. The N6-AMP-lysine intermediate role is filled by Lys-129. Positions 150, 187, 302, and 326 each coordinate NAD(+). Residues Cys-420, Cys-423, Cys-438, and Cys-444 each contribute to the Zn(2+) site. A BRCT domain is found at 605–686; it reads LDNLPLEGQT…DEFLKMIGAS (82 aa).

This sequence belongs to the NAD-dependent DNA ligase family. LigA subfamily. Mg(2+) serves as cofactor. The cofactor is Mn(2+).

It carries out the reaction NAD(+) + (deoxyribonucleotide)n-3'-hydroxyl + 5'-phospho-(deoxyribonucleotide)m = (deoxyribonucleotide)n+m + AMP + beta-nicotinamide D-nucleotide.. Functionally, DNA ligase that catalyzes the formation of phosphodiester linkages between 5'-phosphoryl and 3'-hydroxyl groups in double-stranded DNA using NAD as a coenzyme and as the energy source for the reaction. It is essential for DNA replication and repair of damaged DNA. The protein is DNA ligase of Psychrobacter sp. (strain PRwf-1).